Here is a 61-residue protein sequence, read N- to C-terminus: Small ribosomal subunit protein uS14 (61 aa).

Residues Cys24, Cys27, Cys40, and Cys43 each coordinate Zn(2+).

The protein belongs to the universal ribosomal protein uS14 family. Zinc-binding uS14 subfamily. In terms of assembly, part of the 30S ribosomal subunit. Contacts proteins S3 and S10. Requires Zn(2+) as cofactor.

Functionally, binds 16S rRNA, required for the assembly of 30S particles and may also be responsible for determining the conformation of the 16S rRNA at the A site. The sequence is that of Small ribosomal subunit protein uS14 from Clostridioides difficile (strain 630) (Peptoclostridium difficile).